The following is a 204-amino-acid chain: MTGRRTVSLHVGPVGLCGVDEAGRGPLAGPVVAAAVMLDPKRPIKGLRDSKKLTPAARERLADEIRARALAWCVAEASVAEIDRLNILHATMLAMQRAVAGMSHAPDDVWVDGDRCPEWTWRSQAVVQGDDKVAAIAAASILAKTVRDELMRGLHEAYPLYGFAQHMGYATAAHLAALKANGACPHHRRSFAPVRLLLDQTSLF.

In terms of domain architecture, RNase H type-2 spans 14–203 (VGLCGVDEAG…VRLLLDQTSL (190 aa)). A divalent metal cation contacts are provided by aspartate 20, glutamate 21, and aspartate 112.

The protein belongs to the RNase HII family. Mn(2+) is required as a cofactor. Mg(2+) serves as cofactor.

It is found in the cytoplasm. It carries out the reaction Endonucleolytic cleavage to 5'-phosphomonoester.. Its function is as follows. Endonuclease that specifically degrades the RNA of RNA-DNA hybrids. The protein is Ribonuclease HII of Thiobacillus denitrificans (strain ATCC 25259 / T1).